Here is a 400-residue protein sequence, read N- to C-terminus: Lipid-A-disaccharide synthase (400 aa).

The protein belongs to the LpxB family.

It carries out the reaction a lipid X + a UDP-2-N,3-O-bis[(3R)-3-hydroxyacyl]-alpha-D-glucosamine = a lipid A disaccharide + UDP + H(+). It functions in the pathway bacterial outer membrane biogenesis; LPS lipid A biosynthesis. In terms of biological role, condensation of UDP-2,3-diacylglucosamine and 2,3-diacylglucosamine-1-phosphate to form lipid A disaccharide, a precursor of lipid A, a phosphorylated glycolipid that anchors the lipopolysaccharide to the outer membrane of the cell. The sequence is that of Lipid-A-disaccharide synthase from Acidobacterium capsulatum (strain ATCC 51196 / DSM 11244 / BCRC 80197 / JCM 7670 / NBRC 15755 / NCIMB 13165 / 161).